The following is a 122-amino-acid chain: Prefoldin subunit 1 (122 aa).

This sequence belongs to the prefoldin subunit beta family. Heterohexamer of two PFD-alpha type and four PFD-beta type subunits.

Binds specifically to cytosolic chaperonin (c-CPN) and transfers target proteins to it. Binds to nascent polypeptide chain and promotes folding in an environment in which there are many competing pathways for nonnative proteins. The sequence is that of Prefoldin subunit 1 (pfdn1) from Danio rerio (Zebrafish).